The sequence spans 574 residues: Pre-mRNA-processing protein 45 (574 aa).

Disordered regions lie at residues 1–46 (MAAL…WKPK), 203–234 (PPRFKHKKIPRGPAEPPPPVLQSPPRAATAQD), 350–406 (ETGI…SEMR), 478–503 (AGSSRNDESFGGGTEEGIKEEMSKDR), and 549–574 (MDAARRGGKRTAEDRDEERRKRARDE). 2 stretches are compositionally biased toward pro residues: residues 24-33 (APLPTTPGPQ) and 215-224 (PAEPPPPVLQ). Residues 363-377 (GSEEESDEEEEDEEA) are compositionally biased toward acidic residues. 3 stretches are compositionally biased toward basic and acidic residues: residues 378-397 (IRERNIVREEKRREREKEMR), 493-503 (EGIKEEMSKDR), and 558-574 (RTAEDRDEERRKRARDE).

This sequence belongs to the SNW family. Associated with the spliceosome.

The protein localises to the nucleus. In terms of biological role, involved in pre-mRNA splicing. This chain is Pre-mRNA-processing protein 45 (PRP45), found in Cryptococcus neoformans var. neoformans serotype D (strain JEC21 / ATCC MYA-565) (Filobasidiella neoformans).